A 1188-amino-acid chain; its full sequence is Probable phosphoenolpyruvate synthase (1188 aa).

One can recognise a DOD-type homing endonuclease domain in the interval 536-670; it reads LGGAVLSDGH…LIVGLYRLGI (135 aa). The active-site Tele-phosphohistidine intermediate is His-824. Positions 917, 964, 1061, 1083, 1084, 1085, and 1086 each coordinate substrate. Glu-1061 is a binding site for Mg(2+). Asp-1086 is a binding site for Mg(2+). Residue Cys-1133 is the Proton donor of the active site.

This sequence belongs to the PEP-utilizing enzyme family. The cofactor is Mg(2+). Post-translationally, this protein undergoes a protein self splicing that involves a post-translational excision of the intervening region (intein) followed by peptide ligation.

The enzyme catalyses pyruvate + ATP + H2O = phosphoenolpyruvate + AMP + phosphate + 2 H(+). It participates in carbohydrate biosynthesis; gluconeogenesis. Catalyzes the phosphorylation of pyruvate to phosphoenolpyruvate. The polypeptide is Probable phosphoenolpyruvate synthase (ppsA) (Methanocaldococcus jannaschii (strain ATCC 43067 / DSM 2661 / JAL-1 / JCM 10045 / NBRC 100440) (Methanococcus jannaschii)).